A 133-amino-acid polypeptide reads, in one-letter code: Large-conductance mechanosensitive channel (133 aa).

2 consecutive transmembrane segments (helical) span residues 17-37 (AFIL…GGAF) and 73-93 (IGSF…LYLA).

It belongs to the MscL family. Homopentamer.

Its subcellular location is the cell inner membrane. Its function is as follows. Channel that opens in response to stretch forces in the membrane lipid bilayer. May participate in the regulation of osmotic pressure changes within the cell. The sequence is that of Large-conductance mechanosensitive channel from Synechococcus elongatus (strain ATCC 33912 / PCC 7942 / FACHB-805) (Anacystis nidulans R2).